Consider the following 353-residue polypeptide: 3-ketosteroid-9-alpha-monooxygenase, ferredoxin reductase component (353 aa).

One can recognise an FAD-binding FR-type domain in the interval 8 to 117 (SHVLELQVAE…LAPSGTFVPK (110 aa)). The 90-residue stretch at 264–353 (ATAVVTLDGT…SDSVEVTYDE (90 aa)) folds into the 2Fe-2S ferredoxin-type domain. Positions 300, 305, 308, and 338 each coordinate [2Fe-2S] cluster.

In terms of assembly, monomer. The two-component system 3-ketosteroid-9-alpha-monooxygenase is composed of an oxygenase component KshA and a reductase component KshB. FAD is required as a cofactor. [2Fe-2S] cluster serves as cofactor.

The catalysed reaction is androsta-1,4-diene-3,17-dione + 2 reduced [2Fe-2S]-[ferredoxin] + O2 + 2 H(+) = 9alpha-hydroxyandrosta-1,4-diene-3,17-dione + 2 oxidized [2Fe-2S]-[ferredoxin] + H2O. It functions in the pathway lipid metabolism; steroid biosynthesis. Its function is as follows. Involved in the degradation of cholesterol. Catalyzes the introduction of a 9a-hydroxyl moiety into 1,4-androstadiene-3,17-dione (ADD) to yield the 9alpha-hydroxy-1,4-androstadiene-3,17-dione (9OHADD) intermediate which spontaneously form 3-hydroxy-9,10-seconandrost-1,3,5(10)-triene-9,17-dione (HSA) via the meta-cleavage of ring B with concomitant aromatization of ring A. The chain is 3-ketosteroid-9-alpha-monooxygenase, ferredoxin reductase component (kshB) from Mycolicibacterium smegmatis (strain ATCC 700084 / mc(2)155) (Mycobacterium smegmatis).